The sequence spans 254 residues: Phosphatidylglycerophosphatase B (254 aa).

The chain crosses the membrane as a helical span at residues 2–24 (RSIARRTAVGAALLLVMPVAVWI). The Periplasmic portion of the chain corresponds to 25-54 (SGWRWQPGEQSWLLKAAFWVTETVTQPWGV). Residues 55–66 (ITHLILFGWFLW) form a helical membrane-spanning segment. Topologically, residues 67–71 (CLRFR) are cytoplasmic. Residues 72-94 (IKAAFVLFAILAAAILVGQGVKS) traverse the membrane as a helical segment. Topologically, residues 95 to 161 (WIKDKVQEPR…QKETGFAFPS (67 aa)) are periplasmic. The interval 97-105 (KDKVQEPRP) is phosphatase sequence motif I. Residues 160 to 163 (PSGH) form a phosphatase sequence motif II region. Residues 162-176 (GHTMFAASWALLAVG) traverse the membrane as a helical segment. H163 serves as the catalytic Proton donor; for a subset of substrates. The Cytoplasmic segment spans residues 177–182 (LLWPRR). A helical transmembrane segment spans residues 183–202 (RTLTIAILLVWATGVMGSRL). The segment at 200 to 211 (SRLLLGMHWPRD) is phosphatase sequence motif III. Over 203–208 (LLGMHW) the chain is Periplasmic. The Nucleophile role is filled by H207. A helical transmembrane segment spans residues 209-232 (PRDLVVATLISWALVAVATWLAQR). Topologically, residues 233–254 (ICGPLTPPAEENREIAQREQES) are cytoplasmic.

The protein belongs to the PA-phosphatase related phosphoesterase family. The N-terminus is blocked.

It localises to the cell inner membrane. Its subcellular location is the cell outer membrane. It carries out the reaction a 1,2-diacyl-sn-glycero-3-phospho-(1'-sn-glycero-3'-phosphate) + H2O = a 1,2-diacyl-sn-glycero-3-phospho-(1'-sn-glycerol) + phosphate. The enzyme catalyses a 1,2-diacyl-sn-glycerol 3-diphosphate + H2O = a 1,2-diacyl-sn-glycero-3-phosphate + phosphate + H(+). The catalysed reaction is a 1,2-diacyl-sn-glycero-3-phosphate + H2O = a 1,2-diacyl-sn-glycerol + phosphate. It catalyses the reaction di-trans,octa-cis-undecaprenyl diphosphate + H2O = di-trans,octa-cis-undecaprenyl phosphate + phosphate + H(+). It functions in the pathway phospholipid metabolism; phosphatidylglycerol biosynthesis; phosphatidylglycerol from CDP-diacylglycerol: step 2/2. Catalyzes the dephosphorylation of diacylglycerol diphosphate (DGPP) to phosphatidate (PA) and the subsequent dephosphorylation of PA to diacylglycerol (DAG). Also has undecaprenyl pyrophosphate phosphatase activity, required for the biosynthesis of the lipid carrier undecaprenyl phosphate. Can also use lysophosphatidic acid (LPA) and phosphatidylglycerophosphate as substrates. The pattern of activities varies according to subcellular location, PGP phosphatase activity is higher in the cytoplasmic membrane, whereas PA and LPA phosphatase activities are higher in the outer membrane. Activity is independent of a divalent cation ion and insensitive to inhibition by N-ethylmaleimide. The chain is Phosphatidylglycerophosphatase B (pgpB) from Escherichia coli O157:H7.